We begin with the raw amino-acid sequence, 544 residues long: Probable protein kinase UbiB (544 aa).

In terms of domain architecture, Protein kinase spans Asp-123 to Leu-504. Residues Leu-129 to Val-137 and Lys-155 each bind ATP. Asp-290 (proton acceptor) is an active-site residue. The next 2 helical transmembrane spans lie at Met-501–Leu-521 and Leu-523–Leu-543.

This sequence belongs to the ABC1 family. UbiB subfamily.

The protein localises to the cell inner membrane. It participates in cofactor biosynthesis; ubiquinone biosynthesis [regulation]. Its function is as follows. Is probably a protein kinase regulator of UbiI activity which is involved in aerobic coenzyme Q (ubiquinone) biosynthesis. The sequence is that of Probable protein kinase UbiB from Histophilus somni (strain 129Pt) (Haemophilus somnus).